Here is an 88-residue protein sequence, read N- to C-terminus: Small ribosomal subunit protein uS15 (88 aa).

This sequence belongs to the universal ribosomal protein uS15 family. As to quaternary structure, part of the 30S ribosomal subunit. Forms a bridge to the 50S subunit in the 70S ribosome, contacting the 23S rRNA.

Its function is as follows. One of the primary rRNA binding proteins, it binds directly to 16S rRNA where it helps nucleate assembly of the platform of the 30S subunit by binding and bridging several RNA helices of the 16S rRNA. Functionally, forms an intersubunit bridge (bridge B4) with the 23S rRNA of the 50S subunit in the ribosome. The polypeptide is Small ribosomal subunit protein uS15 (Halothermothrix orenii (strain H 168 / OCM 544 / DSM 9562)).